Consider the following 37-residue polypeptide: Large ribosomal subunit protein bL36c (37 aa).

The protein belongs to the bacterial ribosomal protein bL36 family.

The protein resides in the plastid. The polypeptide is Large ribosomal subunit protein bL36c (Helicosporidium sp. subsp. Simulium jonesii (Green alga)).